Here is a 135-residue protein sequence, read N- to C-terminus: Small ribosomal subunit protein uS12c (135 aa).

It belongs to the universal ribosomal protein uS12 family. In terms of assembly, part of the 30S ribosomal subunit.

It localises to the plastid. It is found in the chloroplast. Functionally, with S4 and S5 plays an important role in translational accuracy. Located at the interface of the 30S and 50S subunits. The sequence is that of Small ribosomal subunit protein uS12c (rps12) from Adiantum capillus-veneris (Maidenhair fern).